Here is an 880-residue protein sequence, read N- to C-terminus: Alanine--tRNA ligase (880 aa).

Histidine 566, histidine 570, cysteine 668, and histidine 672 together coordinate Zn(2+).

Belongs to the class-II aminoacyl-tRNA synthetase family. It depends on Zn(2+) as a cofactor.

The protein resides in the cytoplasm. It carries out the reaction tRNA(Ala) + L-alanine + ATP = L-alanyl-tRNA(Ala) + AMP + diphosphate. Catalyzes the attachment of alanine to tRNA(Ala) in a two-step reaction: alanine is first activated by ATP to form Ala-AMP and then transferred to the acceptor end of tRNA(Ala). Also edits incorrectly charged Ser-tRNA(Ala) and Gly-tRNA(Ala) via its editing domain. This chain is Alanine--tRNA ligase, found in Acetivibrio thermocellus (strain ATCC 27405 / DSM 1237 / JCM 9322 / NBRC 103400 / NCIMB 10682 / NRRL B-4536 / VPI 7372) (Clostridium thermocellum).